A 554-amino-acid chain; its full sequence is Glucose-6-phosphate isomerase (554 aa).

The active-site Proton donor is the E358. Active-site residues include H389 and K515. A compositionally biased stretch (polar residues) spans 527–540; that stretch reads ANNSPAPQSDSSTD. The disordered stretch occupies residues 527-554; the sequence is ANNSPAPQSDSSTDALVRRYRSERGRTS. Over residues 542–554 the composition is skewed to basic and acidic residues; sequence LVRRYRSERGRTS.

Belongs to the GPI family.

It is found in the cytoplasm. The enzyme catalyses alpha-D-glucose 6-phosphate = beta-D-fructose 6-phosphate. It participates in carbohydrate biosynthesis; gluconeogenesis. The protein operates within carbohydrate degradation; glycolysis; D-glyceraldehyde 3-phosphate and glycerone phosphate from D-glucose: step 2/4. In terms of biological role, catalyzes the reversible isomerization of glucose-6-phosphate to fructose-6-phosphate. This chain is Glucose-6-phosphate isomerase, found in Mycolicibacterium paratuberculosis (strain ATCC BAA-968 / K-10) (Mycobacterium paratuberculosis).